The sequence spans 88 residues: Large ribosomal subunit protein bL27 (88 aa).

Residues 1–24 (MATKKSGGSSGNGRDSRGRRLGVK) are disordered.

The protein belongs to the bacterial ribosomal protein bL27 family.

The sequence is that of Large ribosomal subunit protein bL27 from Ehrlichia chaffeensis (strain ATCC CRL-10679 / Arkansas).